The primary structure comprises 44 residues: Somatoliberin (44 aa).

Leucine 44 is subject to Leucine amide.

Belongs to the glucagon family.

Its subcellular location is the secreted. Functionally, GRF is released by the hypothalamus and acts on the adenohypophyse to stimulate the secretion of growth hormone. The polypeptide is Somatoliberin (GHRH) (Ovis aries (Sheep)).